A 314-amino-acid chain; its full sequence is Homoserine O-acetyltransferase (314 aa).

Cys142 (acyl-thioester intermediate) is an active-site residue. Positions 163 and 192 each coordinate substrate. His235 (proton acceptor) is an active-site residue. Glu237 is a catalytic residue. Arg249 lines the substrate pocket.

The protein belongs to the MetA family.

Its subcellular location is the cytoplasm. The enzyme catalyses L-homoserine + acetyl-CoA = O-acetyl-L-homoserine + CoA. It functions in the pathway amino-acid biosynthesis; L-methionine biosynthesis via de novo pathway; O-acetyl-L-homoserine from L-homoserine: step 1/1. Its function is as follows. Transfers an acetyl group from acetyl-CoA to L-homoserine, forming acetyl-L-homoserine. This is Homoserine O-acetyltransferase from Streptococcus thermophilus (strain ATCC BAA-491 / LMD-9).